Here is a 471-residue protein sequence, read N- to C-terminus: 3-isopropylmalate dehydratase large subunit (471 aa).

Residues cysteine 346, cysteine 406, and cysteine 409 each contribute to the [4Fe-4S] cluster site.

It belongs to the aconitase/IPM isomerase family. LeuC type 1 subfamily. Heterodimer of LeuC and LeuD. Requires [4Fe-4S] cluster as cofactor.

It carries out the reaction (2R,3S)-3-isopropylmalate = (2S)-2-isopropylmalate. It participates in amino-acid biosynthesis; L-leucine biosynthesis; L-leucine from 3-methyl-2-oxobutanoate: step 2/4. In terms of biological role, catalyzes the isomerization between 2-isopropylmalate and 3-isopropylmalate, via the formation of 2-isopropylmaleate. The chain is 3-isopropylmalate dehydratase large subunit from Bacillus pumilus (strain SAFR-032).